The primary structure comprises 263 residues: Benzil reductase ((S)-benzoin forming) IRC24 (263 aa).

Residues Ile-7 and Asn-86 each coordinate NADP(+). Catalysis depends on Ser-143, which acts as the Proton donor. NADP(+)-binding residues include Tyr-157, Lys-161, Val-190, and Thr-192. Tyr-157 functions as the Proton acceptor in the catalytic mechanism. The active-site Lowers pKa of active site Tyr is the Lys-161.

This sequence belongs to the short-chain dehydrogenases/reductases (SDR) family.

It catalyses the reaction (S)-benzoin + NADP(+) = benzil + NADPH + H(+). The catalysed reaction is 2-hydroxy-1-phenyl-1-propanone + NADP(+) = 1-phenyl-1,2-propanedione + NADPH + H(+). Reduces benzil stereospecifically to (S)-benzoin. Also reduces 1-phenyl-1,2-propanedione to 2-hydroxy-1-phenyl-1-propanone. Is probably involved in a pathway contributing to genomic integrity. This Saccharomyces cerevisiae (strain ATCC 204508 / S288c) (Baker's yeast) protein is Benzil reductase ((S)-benzoin forming) IRC24 (IRC24).